A 159-amino-acid chain; its full sequence is Transcription elongation factor GreA (159 aa).

A coiled-coil region spans residues 46-73; it reads AEYHAAKEEQSFVEGRIKEIELKLSRMQ.

Belongs to the GreA/GreB family.

Necessary for efficient RNA polymerase transcription elongation past template-encoded arresting sites. The arresting sites in DNA have the property of trapping a certain fraction of elongating RNA polymerases that pass through, resulting in locked ternary complexes. Cleavage of the nascent transcript by cleavage factors such as GreA or GreB allows the resumption of elongation from the new 3'terminus. GreA releases sequences of 2 to 3 nucleotides. The chain is Transcription elongation factor GreA from Vesicomyosocius okutanii subsp. Calyptogena okutanii (strain HA).